Here is a 537-residue protein sequence, read N- to C-terminus: Nedd4 binding protein 3 (537 aa).

The residue at position 172 (serine 172) is a Phosphoserine. 3 disordered regions span residues 173–234, 327–359, and 422–456; these read LDEG…VLSC, RKEL…EEEA, and LQEQ…EARE. A compositionally biased stretch (low complexity) spans 178 to 207; it reads PEPSLSDSSSGGSFGRSPGTGPSPFSSSLG. Residues 295 to 523 are a coiled coil; sequence VDRLHEVAQK…LEQELRVLRE (229 aa).

The protein belongs to the N4BP3 family. In terms of assembly, binds NEDD4. Interacts with 14-3-3 proteins. Interacts with MAVS.

It is found in the cytoplasmic vesicle. The protein localises to the cell projection. It localises to the axon. Its subcellular location is the dendrite. Plays a positive role in the antiviral innate immune signaling pathway. Mechanistically, interacts with MAVS and functions as a positive regulator to promote 'Lys-63'-linked polyubiquitination of MAVS and thus strengthens the interaction between MAVS and TRAF2. Also plays a role in axon and dendrite arborization during cranial nerve development. May also be important for neural crest migration and early development of other anterior structures including eye, brain and cranial cartilage. This Rattus norvegicus (Rat) protein is Nedd4 binding protein 3.